The following is a 186-amino-acid chain: Adrenodoxin, mitochondrial (186 aa).

Residues 1-58 (MAVRLLRVASAALGDTAVRWQPLVGPRAGNRGPGGSIWLGLGGRAAAARTLSLSARAW) constitute a mitochondrion transit peptide. At S61 the chain carries Phosphoserine. K64 bears the N6-acetyllysine; alternate mark. K64 carries the N6-succinyllysine; alternate modification. Residues 65–169 (ITVHFINRDG…NMTVRVPEAV (105 aa)) form the 2Fe-2S ferredoxin-type domain. The [2Fe-2S] cluster site is built by C104, C110, C113, and C150. N6-succinyllysine is present on K156. S175 carries the post-translational modification Phosphoserine.

It belongs to the adrenodoxin/putidaredoxin family. As to quaternary structure, interacts with CYP11A1. [2Fe-2S] cluster serves as cofactor.

The protein resides in the mitochondrion matrix. Essential for the synthesis of various steroid hormones. Participates in the reduction of mitochondrial cytochrome P450 for steroidogenesis. Transfers electrons from adrenodoxin reductase to CYP11A1, a cytochrome P450 that catalyzes cholesterol side-chain cleavage. Does not form a ternary complex with adrenodoxin reductase and CYP11A1 but shuttles between the two enzymes to transfer electrons. This chain is Adrenodoxin, mitochondrial (FDX1), found in Sus scrofa (Pig).